The following is a 275-amino-acid chain: Putative protein A464R (275 aa).

The RNase III domain occupies 51–175; the sequence is KEDVEYLIGM…LMGAIYFDLG (125 aa). A DRBM domain is found at 201 to 269; the sequence is NYKDRLLKHT…SKIALHTMGV (69 aa).

Belongs to the ribonuclease III family.

In Chlorella (PBCV-1), this protein is Putative protein A464R.